The chain runs to 477 residues: Aryl-phospho-beta-D-glucosidase BglC (477 aa).

The active-site Proton donor is the E170. Catalysis depends on E378, which acts as the Nucleophile.

This sequence belongs to the glycosyl hydrolase 1 family.

The enzyme catalyses 6-phospho-beta-D-glucosyl-(1-&gt;4)-D-glucose + H2O = D-glucose 6-phosphate + D-glucose. Is able to catalyze the hydrolysis of aryl-phospho-beta-D-glucosides such as 4-methylumbelliferyl-phospho-beta-D-glucopyranoside (MUG-P), phosphoarbutin and phosphosalicin. Is not essential for growth on arbutin and salicin as the sole carbon source. The sequence is that of Aryl-phospho-beta-D-glucosidase BglC (bglC) from Bacillus subtilis (strain 168).